The chain runs to 914 residues: Translation initiation factor IF-2 (914 aa).

The segment at 58–160 (KTEKKQTAKK…EAEPKIEVMP (103 aa)) is disordered. Over residues 70–91 (KKDTVKKDTVKKTAVKKDDSKA) the composition is skewed to basic and acidic residues. Positions 92 to 103 (AKKTKPIAKKSA) are enriched in basic residues. A compositionally biased stretch (basic and acidic residues) spans 104-160 (PKTEKKVEKKVESKISKPDNEILEAKPEISKPEIKAEPKKEEIEQKQEAEPKIEVMP). The 170-residue stretch at 413-582 (ERVPVITIMG…LLQADLLELK (170 aa)) folds into the tr-type G domain. A G1 region spans residues 422–429 (GHVDHGKT). Residue 422–429 (GHVDHGKT) coordinates GTP. A G2 region spans residues 447–451 (GITQH). Residues 468–471 (DTPG) form a G3 region. GTP contacts are provided by residues 468–472 (DTPGH) and 522–525 (NKMD). Residues 522-525 (NKMD) form a G4 region. Residues 558–560 (SAK) are G5.

The protein belongs to the TRAFAC class translation factor GTPase superfamily. Classic translation factor GTPase family. IF-2 subfamily.

The protein resides in the cytoplasm. One of the essential components for the initiation of protein synthesis. Protects formylmethionyl-tRNA from spontaneous hydrolysis and promotes its binding to the 30S ribosomal subunits. Also involved in the hydrolysis of GTP during the formation of the 70S ribosomal complex. The chain is Translation initiation factor IF-2 from Campylobacter hominis (strain ATCC BAA-381 / DSM 21671 / CCUG 45161 / LMG 19568 / NCTC 13146 / CH001A).